The following is a 456-amino-acid chain: Chordin-like protein 1 (456 aa).

The N-terminal stretch at Met-1–Thr-27 is a signal peptide. VWFC domains follow at residues Thr-35–Pro-100 and Lys-113–Arg-179. Asn-118 carries N-linked (GlcNAc...) asparagine glycosylation. Positions Arg-179–Asp-181 match the Cell attachment site motif. Residues Ala-202 to Ser-223 form a disordered region. The region spanning Gln-258–Pro-323 is the VWFC 3 domain. N-linked (GlcNAc...) asparagine glycosylation is present at Asn-291.

Expressed in the developing cornea and in the eye anterior segment in addition to the retina. Differentially expressed in the fetal brain. There is high expression in cerebellum and neocortex. Expressed in retinal pericytes.

It localises to the secreted. Antagonizes the function of BMP4 by binding to it and preventing its interaction with receptors. Alters the fate commitment of neural stem cells from gliogenesis to neurogenesis. Contributes to neuronal differentiation of neural stem cells in the brain by preventing the adoption of a glial fate. May play a crucial role in dorsoventral axis formation. May play a role in embryonic bone formation. May also play an important role in regulating retinal angiogenesis through modulation of BMP4 actions in endothelial cells. Plays a role during anterior segment eye development. The chain is Chordin-like protein 1 (CHRDL1) from Homo sapiens (Human).